A 297-amino-acid chain; its full sequence is MATH domain and coiled-coil domain-containing protein At2g05420 (297 aa).

The 133-residue stretch at 7 to 139 folds into the MATH domain; that stretch reads SKTITWVIEN…NGELTLVAKV (133 aa). Residues 239 to 281 are a coiled coil; it reads KLDWLEKKHGEIKEKKKKEEASLKRLQEMEKQIFNEAQIYKEK.

The polypeptide is MATH domain and coiled-coil domain-containing protein At2g05420 (Arabidopsis thaliana (Mouse-ear cress)).